Here is a 244-residue protein sequence, read N- to C-terminus: S-adenosyl-L-methionine-dependent Diels-Alderase iliD (244 aa).

This sequence belongs to the class I-like SAM-binding methyltransferase superfamily. Erg6/SMT family. S-adenosyl-L-methionine serves as cofactor.

It carries out the reaction 3-[(2E,4E,8S,10E,12Z)-4,8-dimethyltetradeca-2,4,10,12-tetraenoyl]-4-hydroxy-5-(4-hydroxyphenyl)-1,2-dihydropyridin-2-one = ilicicolin H. Its pathway is mycotoxin biosynthesis. Its function is as follows. S-adenosyl-l-methionine-dependent Diels-Alderase; part of the gene cluster that mediates the biosynthesis of ilicicolin H, a 4-hydroxy-2-pyridonealkaloid that has potent and broad antifungal activities by inhibiting the mitochondrial respiration chain. IliD catalyzes the Diels-Alder reaction that converts the acyclic 2-pyridone intermediate to 8-epi-ilicicolin H. The biosynthesis of ilicicolin H starts with formation of the tetramic acid by the hybrid PKS-NRPS synthetase iliA with the partnering trans-enoyl reductase iliB since iliA lacks a designated enoylreductase (ER) domain. The cytochrome P450 monooxygenase iliC then catalyzes the ring expansion of the tetramate to the acyclic 2-pyridone. The pericyclase iliD further converts the acyclic 2-pyridone into 8-epi-ilicicolin H. 8-epi-ilicicolin H might then spontaneously convert to ilicicolin H since ilicicolin H is produced in the absence of the epimerase iliE, in contrast to what was observed for the Talaromyces variabilis ilicolin H biosynthetic pathway. This is S-adenosyl-L-methionine-dependent Diels-Alderase iliD from Neonectria sp. (strain DH2).